We begin with the raw amino-acid sequence, 147 residues long: Small ribosomal subunit protein bS6 (147 aa).

The tract at residues 96–147 (VTEPSPMMKAKEERFTKRDDREERSDRSEAPRAEAPAKAEAPAKAEDEAAAE) is disordered. Residues 104 to 147 (KAKEERFTKRDDREERSDRSEAPRAEAPAKAEAPAKAEDEAAAE) are compositionally biased toward basic and acidic residues.

This sequence belongs to the bacterial ribosomal protein bS6 family.

Its function is as follows. Binds together with bS18 to 16S ribosomal RNA. This Photobacterium profundum (strain SS9) protein is Small ribosomal subunit protein bS6.